The following is a 372-amino-acid chain: MVVDLDKYLKPGKDHYLALGLEGSANKLGVGVIKHNKGPLSSTNRAEVLSNIRDTYITPPGEGFLPRDTARHHRNWVVRIIKQALATAKIAGKDIDVICFTQGPGMGAPLQSVVIAARTLAQLWNIPIVGVNHCVGHIEMGREITGAENPVVLYVSGGNTQVIAYSKQRYRIFGETLDIAIGNCLDRFARTLKIPNEPAPGYNIEQMAKKGKHLVPLPYTVKGMDLSMSGILAAIDSIAKEMFGKQQKKLIDEESGEPITAEDLCFSLQETLFSMLVEITERALAHVDSNQVLIVGGVGSNQRLQEMMKLMIQDRKNGQIYATDERFCIDNGIMIAHAGLLSYRTGQTNQLNNTVCTQRFRTDEVFVKWRDD.

Positions 133, 137, and 154 each coordinate a divalent metal cation. Residues 154–158 (YVSGG), aspartate 186, glycine 201, glutamate 205, and asparagine 301 each bind substrate. A divalent metal cation is bound at residue aspartate 330.

The protein belongs to the KAE1 / TsaD family. In terms of assembly, component of the EKC/KEOPS complex composed of at least BUD32, CGI121, GON7, KAE1 and PCC1; the whole complex dimerizes. A divalent metal cation is required as a cofactor.

Its subcellular location is the cytoplasm. It is found in the nucleus. It catalyses the reaction L-threonylcarbamoyladenylate + adenosine(37) in tRNA = N(6)-L-threonylcarbamoyladenosine(37) in tRNA + AMP + H(+). Component of the EKC/KEOPS complex that is required for the formation of a threonylcarbamoyl group on adenosine at position 37 (t(6)A37) in tRNAs that read codons beginning with adenine. The complex is probably involved in the transfer of the threonylcarbamoyl moiety of threonylcarbamoyl-AMP (TC-AMP) to the N6 group of A37. KAE1 likely plays a direct catalytic role in this reaction, but requires other protein(s) of the complex to fulfill this activity. The EKC/KEOPS complex also promotes both telomere uncapping and telomere elongation. The complex is required for efficient recruitment of transcriptional coactivators. The protein is tRNA N6-adenosine threonylcarbamoyltransferase of Candida albicans (strain SC5314 / ATCC MYA-2876) (Yeast).